The chain runs to 250 residues: Peptidyl-tRNA hydrolase, mitochondrial (250 aa).

The transit peptide at 1 to 45 (MRLLSGASASRIPCPLLSLARARARCLPVPASATACRAASSSAAA) directs the protein to the mitochondrion. Tyr-68 lines the tRNA pocket. His-73 acts as the Proton acceptor in catalysis. TRNA contacts are provided by Phe-118, Asn-120, and Asn-166.

Belongs to the PTH family.

The protein localises to the mitochondrion. It carries out the reaction an N-acyl-L-alpha-aminoacyl-tRNA + H2O = an N-acyl-L-amino acid + a tRNA + H(+). In terms of biological role, the natural substrate for this enzyme may be peptidyl-tRNAs which drop off the ribosome during protein synthesis. This chain is Peptidyl-tRNA hydrolase, mitochondrial, found in Oryza sativa subsp. japonica (Rice).